The sequence spans 305 residues: Glycine--tRNA ligase alpha subunit (305 aa).

The protein belongs to the class-II aminoacyl-tRNA synthetase family. In terms of assembly, tetramer of two alpha and two beta subunits.

The protein resides in the cytoplasm. The enzyme catalyses tRNA(Gly) + glycine + ATP = glycyl-tRNA(Gly) + AMP + diphosphate. The sequence is that of Glycine--tRNA ligase alpha subunit from Streptococcus gordonii (strain Challis / ATCC 35105 / BCRC 15272 / CH1 / DL1 / V288).